The primary structure comprises 192 residues: uncharacterized protein (192 aa).

The Nudix hydrolase domain maps to 29 to 160 (HRQAAVLIPI…PLDIYRRGDS (132 aa)). The short motif at 67–89 (GAVDDTDASVIAAALREAEEEVA) is the Nudix box element. Mg(2+)-binding residues include E83 and E87.

The protein belongs to the Nudix hydrolase family. PCD1 subfamily. Requires Mn(2+) as cofactor. The cofactor is Mg(2+).

Probably mediates the hydrolysis of some nucleoside diphosphate derivatives. This is an uncharacterized protein from Shigella flexneri serotype 5b (strain 8401).